A 197-amino-acid chain; its full sequence is Nucleoside triphosphate pyrophosphatase (197 aa).

Asp-72 acts as the Proton acceptor in catalysis.

This sequence belongs to the Maf family. A divalent metal cation serves as cofactor.

The protein resides in the cytoplasm. The catalysed reaction is a ribonucleoside 5'-triphosphate + H2O = a ribonucleoside 5'-phosphate + diphosphate + H(+). The enzyme catalyses a 2'-deoxyribonucleoside 5'-triphosphate + H2O = a 2'-deoxyribonucleoside 5'-phosphate + diphosphate + H(+). In terms of biological role, nucleoside triphosphate pyrophosphatase. May have a dual role in cell division arrest and in preventing the incorporation of modified nucleotides into cellular nucleic acids. This is Nucleoside triphosphate pyrophosphatase from Corynebacterium glutamicum (strain ATCC 13032 / DSM 20300 / JCM 1318 / BCRC 11384 / CCUG 27702 / LMG 3730 / NBRC 12168 / NCIMB 10025 / NRRL B-2784 / 534).